We begin with the raw amino-acid sequence, 123 residues long: Fluoride-specific ion channel FluC 1 (123 aa).

Helical transmembrane passes span 33-53 (TFLINISGAFVIGYLSVLFGV), 59-79 (YGTMLNAGVLTGILGGYTTFS), and 98-118 (VFYLVASVLSGLFAAWLGAML). G73 and T76 together coordinate Na(+).

It belongs to the fluoride channel Fluc/FEX (TC 1.A.43) family.

Its subcellular location is the cell inner membrane. It catalyses the reaction fluoride(in) = fluoride(out). With respect to regulation, na(+) is not transported, but it plays an essential structural role and its presence is essential for fluoride channel function. Fluoride-specific ion channel. Important for reducing fluoride concentration in the cell, thus reducing its toxicity. The sequence is that of Fluoride-specific ion channel FluC 1 from Brucella melitensis biotype 1 (strain ATCC 23456 / CCUG 17765 / NCTC 10094 / 16M).